We begin with the raw amino-acid sequence, 480 residues long: Glycogen synthase (480 aa).

This sequence belongs to the glycosyltransferase 1 family. Bacterial/plant glycogen synthase subfamily.

It carries out the reaction [(1-&gt;4)-alpha-D-glucosyl](n) + ADP-alpha-D-glucose = [(1-&gt;4)-alpha-D-glucosyl](n+1) + ADP + H(+). It functions in the pathway glycan biosynthesis; glycogen biosynthesis. Functionally, synthesizes alpha-1,4-glucan chains using ADP-glucose. The sequence is that of Glycogen synthase from Rhizobium etli (strain ATCC 51251 / DSM 11541 / JCM 21823 / NBRC 15573 / CFN 42).